The primary structure comprises 237 residues: MSAPASTTQATGSTTSTTTKTAGATPATASGLFTIPDGDFFSTARAVVASDAVATNEDLSEIEAVWKDMKVPTDTMAQAAWDLVRHCADVGSSAQTEMIDTGPYSNGISRARLAAAIKEVCTLRQFCMKYAPVVWNWMLTNNSPPANWQAQGFKPEHKFAAFDFFNGVTNPAAIMPKEGLIRPPSEAEMNAAQTAAFVKITKARAQSNDFASLDAAVTRGRITGTTTAEAVVTLPPP.

The segment at 1-28 (MSAPASTTQATGSTTSTTTKTAGATPAT) is disordered.

The protein belongs to the potexvirus capsid protein family.

Its subcellular location is the virion. In terms of biological role, required for genome encapsidation. Forms ribonucleoprotein complexes along with TGB1 helicase and viral RNA. The protein is Coat protein of Brassica campestris (Field mustard).